We begin with the raw amino-acid sequence, 101 residues long: MAKTSMKAREAKRAKLVAKFASKRTELKAIIVDMNASEEARWDAVLQLQQLPRDSSPSRQRNRCNITGRPHGFLRKFGLSRIKVREHAMKGEIPGLKKASW.

The protein belongs to the universal ribosomal protein uS14 family. In terms of assembly, part of the 30S ribosomal subunit. Contacts proteins S3 and S10.

Its function is as follows. Binds 16S rRNA, required for the assembly of 30S particles and may also be responsible for determining the conformation of the 16S rRNA at the A site. The protein is Small ribosomal subunit protein uS14 of Aeromonas hydrophila subsp. hydrophila (strain ATCC 7966 / DSM 30187 / BCRC 13018 / CCUG 14551 / JCM 1027 / KCTC 2358 / NCIMB 9240 / NCTC 8049).